A 71-amino-acid chain; its full sequence is Small ribosomal subunit protein bS21 (71 aa).

The disordered stretch occupies residues 40-71 (KPTQVRKRKQAAAVKRHMKRLNREQQRRQRPY). The span at 43 to 59 (QVRKRKQAAAVKRHMKR) shows a compositional bias: basic residues. Residues 60-71 (LNREQQRRQRPY) are compositionally biased toward basic and acidic residues.

The protein belongs to the bacterial ribosomal protein bS21 family.

The chain is Small ribosomal subunit protein bS21 from Halorhodospira halophila (strain DSM 244 / SL1) (Ectothiorhodospira halophila (strain DSM 244 / SL1)).